Here is a 394-residue protein sequence, read N- to C-terminus: MSKEKFERTKPHVNVGTIGHVDHGKTTLTAAITTVLAKTYGGNARAFDQIDNAPEEKARGITINTSHVEYDTPSRHYAHVDCPGHADYVKNMITGAAQMDGAILVVAATDGPMPQTREHILLGRQVGVPYIIVFMNKCDMVDDEELLELVEMEVRDLLSTYDFPGDDTPVVRGSALKALEGEPEWEAKIIELAGYLDSYIPEPERAIDKPFLLPIEDVFSISGRGTVVTGRVERGIVKVGEEVEIVGLKDTVKSTCTGVEMFRKLLDEGRAGENVGVLLRGIKREDIERGQVLAKPGSIKPHTKFESEVYILSKDEGGRHTPFFKGYRPQFYFRTTDVTGTIELPEGVEMVMPGDNIQMIVNLIAPIAMDDGLRFAIREGGRTVGAGVVAKVIE.

The 195-residue stretch at 10-204 (KPHVNVGTIG…YLDSYIPEPE (195 aa)) folds into the tr-type G domain. A G1 region spans residues 19 to 26 (GHVDHGKT). 19–26 (GHVDHGKT) contacts GTP. A Mg(2+)-binding site is contributed by threonine 26. Positions 60–64 (GITIN) are G2. The tract at residues 81–84 (DCPG) is G3. Residues 81–85 (DCPGH) and 136–139 (NKCD) contribute to the GTP site. The interval 136-139 (NKCD) is G4. The segment at 174-176 (SAL) is G5.

Belongs to the TRAFAC class translation factor GTPase superfamily. Classic translation factor GTPase family. EF-Tu/EF-1A subfamily. Monomer.

The protein localises to the cytoplasm. It carries out the reaction GTP + H2O = GDP + phosphate + H(+). GTP hydrolase that promotes the GTP-dependent binding of aminoacyl-tRNA to the A-site of ribosomes during protein biosynthesis. The polypeptide is Elongation factor Tu 1 (Yersinia enterocolitica serotype O:8 / biotype 1B (strain NCTC 13174 / 8081)).